Here is a 183-residue protein sequence, read N- to C-terminus: MTIKREMRNDKRAAPKAPINENISAREVRLIGADGEQVGIVSIDEALRIADEAKLDLVEISADAVPPVCKVMDYGKHLFEKKKQANEAKKNQKQIQIKEIKFRPGTEDGDYQVKLRNLVRFLTDGDKAKISLRFRGREMAHQELGMELLKRVEADLAEYGTVEQHPKMEGRQLMMVIAPKKKK.

Belongs to the IF-3 family. In terms of assembly, monomer.

It localises to the cytoplasm. In terms of biological role, IF-3 binds to the 30S ribosomal subunit and shifts the equilibrium between 70S ribosomes and their 50S and 30S subunits in favor of the free subunits, thus enhancing the availability of 30S subunits on which protein synthesis initiation begins. This chain is Translation initiation factor IF-3, found in Pseudomonas putida (strain W619).